A 68-amino-acid chain; its full sequence is U-actitoxin-Avt1 (68 aa).

A signal peptide spans 1–22 (MNSKAIISVFLIMLVVVSCTQA). The propeptide occupies 23 to 40 (TYETEDDDEPGPRHSEKR). The segment at 24–50 (YETEDDDEPGPRHSEKRSCARGCGGDS) is disordered. The segment covering 32-41 (PGPRHSEKRS) has biased composition (basic and acidic residues). Intrachain disulfides connect cysteine 42–cysteine 54, cysteine 46–cysteine 59, and cysteine 52–cysteine 66.

In terms of biological role, stable protein with probable toxin activity. Does not show activity on all channels tested. Shows no hemolytic activity on rat erythrocytes. In Aulactinia veratra (Green snakelock anemone), this protein is U-actitoxin-Avt1.